Consider the following 93-residue polypeptide: Small ribosomal subunit protein uS19 (93 aa).

Belongs to the universal ribosomal protein uS19 family.

Protein S19 forms a complex with S13 that binds strongly to the 16S ribosomal RNA. The polypeptide is Small ribosomal subunit protein uS19 (Saccharopolyspora erythraea (strain ATCC 11635 / DSM 40517 / JCM 4748 / NBRC 13426 / NCIMB 8594 / NRRL 2338)).